A 590-amino-acid polypeptide reads, in one-letter code: 2-isopropylmalate synthase (590 aa).

The 275-residue stretch at proline 40–aspartate 314 folds into the Pyruvate carboxyltransferase domain. Residues aspartate 49, histidine 253, histidine 255, and asparagine 289 each contribute to the Mg(2+) site. A regulatory domain region spans residues alanine 456–valine 590.

Belongs to the alpha-IPM synthase/homocitrate synthase family. LeuA type 2 subfamily. Homodimer. Mg(2+) is required as a cofactor.

The protein resides in the cytoplasm. The catalysed reaction is 3-methyl-2-oxobutanoate + acetyl-CoA + H2O = (2S)-2-isopropylmalate + CoA + H(+). It participates in amino-acid biosynthesis; L-leucine biosynthesis; L-leucine from 3-methyl-2-oxobutanoate: step 1/4. Catalyzes the condensation of the acetyl group of acetyl-CoA with 3-methyl-2-oxobutanoate (2-ketoisovalerate) to form 3-carboxy-3-hydroxy-4-methylpentanoate (2-isopropylmalate). The polypeptide is 2-isopropylmalate synthase (Leifsonia xyli subsp. xyli (strain CTCB07)).